The sequence spans 165 residues: Lipoprotein signal peptidase (165 aa).

A run of 3 helical transmembrane segments spans residues 6-26 (SSVEIGDSMIYIFLFLILLII), 68-88 (GKIDIVSILAVIAIGLILFYF), and 95-115 (ISFLERIAYTMIFSGAIGNMI). Active-site residues include aspartate 125 and aspartate 141. A helical membrane pass occupies residues 132–152 (IWSFIFNFADVWINIGVVLII).

This sequence belongs to the peptidase A8 family.

It is found in the cell inner membrane. It catalyses the reaction Release of signal peptides from bacterial membrane prolipoproteins. Hydrolyzes -Xaa-Yaa-Zaa-|-(S,diacylglyceryl)Cys-, in which Xaa is hydrophobic (preferably Leu), and Yaa (Ala or Ser) and Zaa (Gly or Ala) have small, neutral side chains.. Its pathway is protein modification; lipoprotein biosynthesis (signal peptide cleavage). In terms of biological role, this protein specifically catalyzes the removal of signal peptides from prolipoproteins. This chain is Lipoprotein signal peptidase, found in Fusobacterium nucleatum subsp. nucleatum (strain ATCC 25586 / DSM 15643 / BCRC 10681 / CIP 101130 / JCM 8532 / KCTC 2640 / LMG 13131 / VPI 4355).